The chain runs to 183 residues: ATP synthase subunit delta, chloroplastic (183 aa).

The protein belongs to the ATPase delta chain family. F-type ATPases have 2 components, F(1) - the catalytic core - and F(0) - the membrane proton channel. F(1) has five subunits: alpha(3), beta(3), gamma(1), delta(1), epsilon(1). CF(0) has four main subunits: a(1), b(1), b'(1) and c(10-14). The alpha and beta chains form an alternating ring which encloses part of the gamma chain. F(1) is attached to F(0) by a central stalk formed by the gamma and epsilon chains, while a peripheral stalk is formed by the delta, b and b' chains.

It localises to the plastid. It is found in the chloroplast thylakoid membrane. F(1)F(0) ATP synthase produces ATP from ADP in the presence of a proton or sodium gradient. F-type ATPases consist of two structural domains, F(1) containing the extramembraneous catalytic core and F(0) containing the membrane proton channel, linked together by a central stalk and a peripheral stalk. During catalysis, ATP synthesis in the catalytic domain of F(1) is coupled via a rotary mechanism of the central stalk subunits to proton translocation. Its function is as follows. This protein is part of the stalk that links CF(0) to CF(1). It either transmits conformational changes from CF(0) to CF(1) or is implicated in proton conduction. The protein is ATP synthase subunit delta, chloroplastic of Cyanidium caldarium (Red alga).